The primary structure comprises 488 residues: 3-octaprenyl-4-hydroxybenzoate carboxy-lyase (488 aa).

N172 contributes to the Mn(2+) binding site. Residues 175 to 177 (IYR), 189 to 191 (RWL), and 194 to 195 (RG) each bind prenylated FMN. Residue E238 coordinates Mn(2+). D287 acts as the Proton donor in catalysis.

Belongs to the UbiD family. In terms of assembly, homohexamer. Prenylated FMN serves as cofactor. The cofactor is Mn(2+).

It localises to the cell membrane. The enzyme catalyses a 4-hydroxy-3-(all-trans-polyprenyl)benzoate + H(+) = a 2-(all-trans-polyprenyl)phenol + CO2. The protein operates within cofactor biosynthesis; ubiquinone biosynthesis. Functionally, catalyzes the decarboxylation of 3-octaprenyl-4-hydroxy benzoate to 2-octaprenylphenol, an intermediate step in ubiquinone biosynthesis. This chain is 3-octaprenyl-4-hydroxybenzoate carboxy-lyase, found in Pseudomonas aeruginosa (strain LESB58).